A 605-amino-acid polypeptide reads, in one-letter code: Methyl-CpG-binding domain protein 1 (605 aa).

The region spanning 1-69 (MAEDWLDCPA…TLFDFKQGIL (69 aa)) is the MBD domain. The tract at residues 80–123 (AVASKKRKKPSRPAKTRKRQVGPQSGEVRKEAPRDETKADTDTA) is disordered. Basic residues predominate over residues 83–99 (SKKRKKPSRPAKTRKRQ). A Nuclear localization signal motif is present at residues 84-88 (KKRKK). Residues 106-120 (EVRKEAPRDETKADT) show a composition bias toward basic and acidic residues. K117 participates in a covalent cross-link: Glycyl lysine isopeptide (Lys-Gly) (interchain with G-Cter in SUMO2). CXXC-type zinc fingers lie at residues 169–216 (RMFK…RRCL) and 217–263 (RIVE…RRCL). Residues C176, C179, C182, C188, C191, C194, C210, C215, C225, C228, C231, C237, C240, C243, C257, and C262 each coordinate Zn(2+). The disordered stretch occupies residues 269–308 (RRKGGCDSKMAARRRPGAQPLPPPPPSQSPEPTEPHPRAL). Residue K277 forms a Glycyl lysine isopeptide (Lys-Gly) (interchain with G-Cter in SUMO2) linkage. Pro residues predominate over residues 287 to 297 (QPLPPPPPSQS). S297 is modified (phosphoserine). A CXXC-type 3 zinc finger spans residues 330 to 378 (TNRRQNRKCGACAACLRRMDCGRCDFCCDKPKFGGSNQKRQKCRWRQCL). 8 residues coordinate Zn(2+): C338, C341, C344, C350, C353, C356, C372, and C377. A phosphoserine mark is found at S391 and S399. Residues 391-451 (SESEDGAGSP…EAGGGFVLPP (61 aa)) are disordered. Residues 403–417 (YRRRKRPSSARRHHL) are compositionally biased toward basic residues. Residue K422 forms a Glycyl lysine isopeptide (Lys-Gly) (interchain with G-Cter in SUMO2) linkage. A compositionally biased stretch (polar residues) spans 426–439 (ATRTAQPDHTQAPT). K440 is covalently cross-linked (Glycyl lysine isopeptide (Lys-Gly) (interchain with G-Cter in SUMO2)). Residues K499 and K538 each participate in a glycyl lysine isopeptide (Lys-Gly) (interchain with G-Cter in SUMO2); alternate cross-link. The segment at 520 to 573 (VLVPGCPSKAVDPGLPSVKQEPPDPEEDKEENKDDSASKLAPEEEAGGAGTPVI) is disordered. The interval 529-592 (AVDPGLPSVK…RFRDTAVWLP (64 aa)) is transcriptional repression domain (TRD). A Glycyl lysine isopeptide (Lys-Gly) (interchain with G-Cter in SUMO2) cross-link involves residue K558.

Interacts with OASL, ATF7IP, ATF7IP2 and BAHD1. Binds CHAF1A and the SUV39H1-CBX5 complex via the MBD domain. Binds MGP via the TRD domain. May be part of the MeCP1 complex. Post-translationally, sumoylated, sumoylation may increase interaction with ATF7IP. Widely expressed.

The protein localises to the nucleus. The protein resides in the nucleus matrix. It localises to the nucleus speckle. It is found in the chromosome. Functionally, transcriptional repressor that binds CpG islands in promoters where the DNA is methylated at position 5 of cytosine within CpG dinucleotides. Binding is abolished by the presence of 7-mG that is produced by DNA damage by methylmethanesulfonate (MMS). Acts as transcriptional repressor and plays a role in gene silencing by recruiting ATF7IP, which in turn recruits factors such as the histone methyltransferase SETDB1. Probably forms a complex with SETDB1 and ATF7IP that represses transcription and couples DNA methylation and histone 'Lys-9' trimethylation. Isoform 1 and isoform 2 can also repress transcription from unmethylated promoters. This Homo sapiens (Human) protein is Methyl-CpG-binding domain protein 1.